We begin with the raw amino-acid sequence, 226 residues long: Uracil-DNA glycosylase (226 aa).

D64 (proton acceptor) is an active-site residue.

This sequence belongs to the uracil-DNA glycosylase (UDG) superfamily. UNG family.

The protein resides in the cytoplasm. It carries out the reaction Hydrolyzes single-stranded DNA or mismatched double-stranded DNA and polynucleotides, releasing free uracil.. Functionally, excises uracil residues from the DNA which can arise as a result of misincorporation of dUMP residues by DNA polymerase or due to deamination of cytosine. This chain is Uracil-DNA glycosylase, found in Vibrio parahaemolyticus serotype O3:K6 (strain RIMD 2210633).